The sequence spans 352 residues: Nicotinate-nucleotide--dimethylbenzimidazole phosphoribosyltransferase (352 aa).

Glutamate 316 acts as the Proton acceptor in catalysis.

The protein belongs to the CobT family.

It catalyses the reaction 5,6-dimethylbenzimidazole + nicotinate beta-D-ribonucleotide = alpha-ribazole 5'-phosphate + nicotinate + H(+). It participates in nucleoside biosynthesis; alpha-ribazole biosynthesis; alpha-ribazole from 5,6-dimethylbenzimidazole: step 1/2. In terms of biological role, catalyzes the synthesis of alpha-ribazole-5'-phosphate from nicotinate mononucleotide (NAMN) and 5,6-dimethylbenzimidazole (DMB). The sequence is that of Nicotinate-nucleotide--dimethylbenzimidazole phosphoribosyltransferase from Clostridium acetobutylicum (strain ATCC 824 / DSM 792 / JCM 1419 / IAM 19013 / LMG 5710 / NBRC 13948 / NRRL B-527 / VKM B-1787 / 2291 / W).